Consider the following 367-residue polypeptide: Alanine racemase (367 aa).

The Proton acceptor; specific for D-alanine role is filled by Lys35. N6-(pyridoxal phosphate)lysine is present on Lys35. Arg130 serves as a coordination point for substrate. Tyr256 acts as the Proton acceptor; specific for L-alanine in catalysis. Position 304 (Met304) interacts with substrate.

This sequence belongs to the alanine racemase family. Pyridoxal 5'-phosphate is required as a cofactor.

It catalyses the reaction L-alanine = D-alanine. The protein operates within amino-acid biosynthesis; D-alanine biosynthesis; D-alanine from L-alanine: step 1/1. Its function is as follows. Catalyzes the interconversion of L-alanine and D-alanine. May also act on other amino acids. The sequence is that of Alanine racemase (alr) from Methylibium petroleiphilum (strain ATCC BAA-1232 / LMG 22953 / PM1).